The sequence spans 79 residues: Small ribosomal subunit protein uS17 (79 aa).

This sequence belongs to the universal ribosomal protein uS17 family. In terms of assembly, part of the 30S ribosomal subunit.

Functionally, one of the primary rRNA binding proteins, it binds specifically to the 5'-end of 16S ribosomal RNA. This Bartonella quintana (strain Toulouse) (Rochalimaea quintana) protein is Small ribosomal subunit protein uS17.